A 150-amino-acid polypeptide reads, in one-letter code: Cytochrome c oxidase subunit 5A, mitochondrial (150 aa).

A mitochondrion-targeting transit peptide spans Met1 to Tyr41. Positions Leu2–Ala17 match the SIFI-degron motif. N6-acetyllysine is present on residues Lys87 and Lys113. The residue at position 141 (Thr141) is a Phosphothreonine.

This sequence belongs to the cytochrome c oxidase subunit 5A family. As to quaternary structure, component of the cytochrome c oxidase (complex IV, CIV), a multisubunit enzyme composed of 14 subunits. The complex is composed of a catalytic core of 3 subunits MT-CO1, MT-CO2 and MT-CO3, encoded in the mitochondrial DNA, and 11 supernumerary subunits COX4I, COX5A, COX5B, COX6A, COX6B, COX6C, COX7A, COX7B, COX7C, COX8 and NDUFA4, which are encoded in the nuclear genome. The complex exists as a monomer or a dimer and forms supercomplexes (SCs) in the inner mitochondrial membrane with NADH-ubiquinone oxidoreductase (complex I, CI) and ubiquinol-cytochrome c oxidoreductase (cytochrome b-c1 complex, complex III, CIII), resulting in different assemblies (supercomplex SCI(1)III(2)IV(1) and megacomplex MCI(2)III(2)IV(2)). Interacts with AFG1L. Interacts with RAB5IF. In response to mitochondrial stress, the precursor protein is ubiquitinated by the SIFI complex in the cytoplasm before mitochondrial import, leading to its degradation. Within the SIFI complex, UBR4 initiates ubiquitin chain that are further elongated or branched by KCMF1.

It is found in the mitochondrion inner membrane. It participates in energy metabolism; oxidative phosphorylation. Its function is as follows. Component of the cytochrome c oxidase, the last enzyme in the mitochondrial electron transport chain which drives oxidative phosphorylation. The respiratory chain contains 3 multisubunit complexes succinate dehydrogenase (complex II, CII), ubiquinol-cytochrome c oxidoreductase (cytochrome b-c1 complex, complex III, CIII) and cytochrome c oxidase (complex IV, CIV), that cooperate to transfer electrons derived from NADH and succinate to molecular oxygen, creating an electrochemical gradient over the inner membrane that drives transmembrane transport and the ATP synthase. Cytochrome c oxidase is the component of the respiratory chain that catalyzes the reduction of oxygen to water. Electrons originating from reduced cytochrome c in the intermembrane space (IMS) are transferred via the dinuclear copper A center (CU(A)) of subunit 2 and heme A of subunit 1 to the active site in subunit 1, a binuclear center (BNC) formed by heme A3 and copper B (CU(B)). The BNC reduces molecular oxygen to 2 water molecules using 4 electrons from cytochrome c in the IMS and 4 protons from the mitochondrial matrix. The chain is Cytochrome c oxidase subunit 5A, mitochondrial (COX5A) from Cebuella pygmaea (Pygmy marmoset).